The sequence spans 553 residues: Protein YloV (553 aa).

In terms of domain architecture, DhaL spans 9–201 (RTFAEMILAG…LLCVYEGFLA (193 aa)).

The sequence is that of Protein YloV (yloV) from Bacillus subtilis (strain 168).